The primary structure comprises 264 residues: Phosphonates import ATP-binding protein PhnC (264 aa).

The ABC transporter domain maps to 8–255 (LQAENLRMTF…KLIEIYGPEF (248 aa)). 40–47 (GPSGSGKS) provides a ligand contact to ATP.

Belongs to the ABC transporter superfamily. Phosphonates importer (TC 3.A.1.9.1) family. The complex is composed of two ATP-binding proteins (PhnC), two transmembrane proteins (PhnE) and a solute-binding protein (PhnD).

Its subcellular location is the cell inner membrane. It carries out the reaction phosphonate(out) + ATP + H2O = phosphonate(in) + ADP + phosphate + H(+). Part of the ABC transporter complex PhnCDE involved in phosphonates import. Responsible for energy coupling to the transport system. The polypeptide is Phosphonates import ATP-binding protein PhnC (Maricaulis maris (strain MCS10) (Caulobacter maris)).